The primary structure comprises 62 residues: Translational regulator CsrA (62 aa).

Belongs to the CsrA/RsmA family. As to quaternary structure, homodimer; the beta-strands of each monomer intercalate to form a hydrophobic core, while the alpha-helices form wings that extend away from the core.

It is found in the cytoplasm. Functionally, a key translational regulator that binds mRNA to regulate translation initiation and/or mRNA stability. Mediates global changes in gene expression, shifting from rapid growth to stress survival by linking envelope stress, the stringent response and the catabolite repression systems. Usually binds in the 5'-UTR; binding at or near the Shine-Dalgarno sequence prevents ribosome-binding, repressing translation, binding elsewhere in the 5'-UTR can activate translation and/or stabilize the mRNA. Its function is antagonized by small RNA(s). This chain is Translational regulator CsrA, found in Haemophilus ducreyi (strain 35000HP / ATCC 700724).